A 525-amino-acid chain; its full sequence is uncharacterized protein (525 aa).

Residues 1 to 21 (MLECLSALLVLFAGGGGSVLA) form the signal peptide. Over 22 to 448 (AVQSKTVADP…ISAASQLDKR (427 aa)) the chain is Extracellular. The interval 242–264 (KVSSENCSKDTDDKSGSKKERNT) is disordered. The chain crosses the membrane as a helical span at residues 449 to 469 (IFIFTAITVSITTLMMLGFSY). Over 470–525 (RSRVSFRDHSIDDSDDDNDWSDDEVEFDEEYFYSLPVSIPEKGISLDKMAQQLGVE) the chain is Cytoplasmic.

The protein resides in the membrane. This is an uncharacterized protein from Saccharomyces cerevisiae (strain ATCC 204508 / S288c) (Baker's yeast).